The sequence spans 111 residues: MVNLFPVFTLIVIITILITTRELSTTMLIVSLVTDYIIINTQYTEQQHEMNTFSTQQLPQKNSFNESYNKDKKSNTHIPYQWLAPELKEAENKYWWGNYDPYSEPVLAGAS.

The helical transmembrane segment at leucine 10–leucine 32 threads the bilayer. N-linked (GlcNAc...) asparagine; by host glycosylation is present at asparagine 65.

The protein belongs to the asfivirus H108R family.

Its subcellular location is the virion membrane. The protein is Inner membrane protein H108R of African swine fever virus (isolate Tick/Malawi/Lil 20-1/1983) (ASFV).